The following is a 518-amino-acid chain: Sensory neuron membrane protein 1 (518 aa).

The Cytoplasmic segment spans residues 1 to 8 (MKTAEKLG). Residues 9-29 (IIGTTISIFGIGFGWGVFPWL) traverse the membrane as a helical segment. The Extracellular segment spans residues 30–456 (IRMQIGRVSL…ELFRILQFLD (427 aa)). N-linked (GlcNAc...) asparagine glycans are attached at residues Asn-64, Asn-186, Asn-225, Asn-316, Asn-334, and Asn-381. 3 cysteine pairs are disulfide-bonded: Cys-265–Cys-330, Cys-294–Cys-349, and Cys-332–Cys-338. A helical transmembrane segment spans residues 457-477 (VIKWVITLFGAGVVSGGVGLY). Residues 478–518 (YKEKNSLPITPTSSATSKKIDNPTDKTTTHELGHTNFGYIN) are Cytoplasmic-facing.

Belongs to the CD36 family.

It localises to the cell membrane. Its function is as follows. Plays an olfactory role that is not restricted to pheromone sensitivity. The chain is Sensory neuron membrane protein 1 from Pediculus humanus subsp. corporis (Body louse).